The primary structure comprises 1220 residues: MPGLLNWITGAALPLTASDVTSCVSGYALGLTASLTYGNLEAQPFQGLFVYPLDECTTVIGFEAVIADRVVTVQIKDKAKLESGHFDASHVRSPTVTGNILQDGVSIAPHSCTPGKVTLDEDLERILFVANLGTIAPMENVTIFISTSSELPTLPSGAVRVLLPAVCAPTVPQFCTKSTGTSNQQAQGKDRHCFGAWAPGSWNKLCLATLLNTEVSNPMEYEFNFQLEIRGPCLLAGVESPTHEIRADAAPSARSAKSIIITLANKHTFDRPVEILIHPSEPHMPHVLIEKGDMTLGEFDQHLKGRTDFIKGMKKKSRAERKTEIIRKRLHKDIPHHSVIMLNFCPDLQSVQPCLRKAHGEFIFLIDRSSSMSGISMHRVKDAMLVALKSLMPACLFNIIGFGSTFKSLFPSSQTYSEDSLAMACDDIQRMKADMGGTNILSPLKWVIRQPVHRGHPRLLFVITDGAVNNTGKVLELVRNHAFSTRCYSFGIGPNVCHRLVKGLASVSEGSAELLMEGERLQPKMVKSLKKAMAPVLSDVTVEWIFPETTEVLVSPVSASSLFPGERLVGYGIVCDASLHISNPRSDKRRRYSMLHSQESGSSVFYHSQDDGPGLEGGDCAKNSGAPFILGQAKNARLASGDSTTKHDLNLSQRRRAYSTNQITNHKPLPRATMASDPMPAAKRYPLRKARLQDLTNQTSLDVQRWQIDLQPLLNSGQDLNQGPKLRGPGARRPSLLPQGCQPFLPWGQETQAWSPVRERTSDSRSPGDLEPSHHPSAFETETSSDWDPPAESQERASPSRPATPAPVLGKALVKGLHDSQRLQWEVSFELGTPGPERGGAQDADLWSETFHHLAARAIIRDFEQLAEREGEIEQGSNRRYQVSALHTSKACNIISKYTAFVPVDVSKSRYLPTVVEYPNSAALRMLGSRALAQQWRGTSSGFGRPQTMLGEDSAPGNGKFQALNMEASPTALFSEARSPGREKHGASEGPQRSLATNTLSSMKASENLFGSWLNLNKSRLLTRAAKGFLSKPLIKAVESTSGNQSFDYIPLVSLQLASGAFLLNEAFCEATHIPMEKLKWTSPFTCHRVSLTTRPSESKTPSPQLCTSSPPRHPSCDSFSLEPLAKGKLGLEPRAVVEHTGKLWATVVGLAWLEHSSASYFTEWELVAAKANSWLEQQEVPEGRTQGTLKAAARQLFVLLRHWDENLEFNMLCYNPNYV.

The first 18 residues, 1 to 18 (MPGLLNWITGAALPLTAS), serve as a signal peptide directing secretion. One can recognise a VIT domain in the interval 19-149 (DVTSCVSGYA…NVTIFISTSS (131 aa)). N-linked (GlcNAc...) asparagine glycosylation is present at Asn140. Residues 361–529 (EFIFLIDRSS…RLQPKMVKSL (169 aa)) enclose the VWFA domain. Asn650 carries N-linked (GlcNAc...) asparagine glycosylation. Residues 715–807 (NSGQDLNQGP…SPSRPATPAP (93 aa)) are disordered. The span at 757 to 774 (VRERTSDSRSPGDLEPSH) shows a compositional bias: basic and acidic residues. Over residues 796–807 (RASPSRPATPAP) the composition is skewed to low complexity. Tyr881 bears the Phosphotyrosine mark. Disordered regions lie at residues 937 to 962 (RGTS…GKFQ) and 976 to 995 (EARS…QRSL). The N-linked (GlcNAc...) asparagine glycan is linked to Asn1017. A compositionally biased stretch (polar residues) spans 1093-1111 (TTRPSESKTPSPQLCTSSP). The tract at residues 1093 to 1115 (TTRPSESKTPSPQLCTSSPPRHP) is disordered.

Its subcellular location is the secreted. In Homo sapiens (Human), this protein is von Willebrand factor A domain-containing protein 5B1 (VWA5B1).